A 299-amino-acid polypeptide reads, in one-letter code: Protoheme IX farnesyltransferase (299 aa).

A run of 9 helical transmembrane segments spans residues Val27–Phe47, Leu53–Ile73, Phe97–Trp117, Leu121–Leu141, Ile149–Gly169, Ala175–Ile195, Ile222–Ala242, Tyr244–Leu264, and Ala273–Leu293.

This sequence belongs to the UbiA prenyltransferase family. Protoheme IX farnesyltransferase subfamily.

The protein resides in the cell inner membrane. It catalyses the reaction heme b + (2E,6E)-farnesyl diphosphate + H2O = Fe(II)-heme o + diphosphate. Its pathway is porphyrin-containing compound metabolism; heme O biosynthesis; heme O from protoheme: step 1/1. In terms of biological role, converts heme B (protoheme IX) to heme O by substitution of the vinyl group on carbon 2 of heme B porphyrin ring with a hydroxyethyl farnesyl side group. This chain is Protoheme IX farnesyltransferase, found in Vibrio vulnificus (strain CMCP6).